A 63-amino-acid chain; its full sequence is MAKKLAITLTRSVIGRPEDQRITVRTLGLRKMHQTVVHNDNPAIRGMINKVAHLVKVKEIEEE.

It belongs to the universal ribosomal protein uL30 family. As to quaternary structure, part of the 50S ribosomal subunit.

The chain is Large ribosomal subunit protein uL30 from Geobacillus stearothermophilus (Bacillus stearothermophilus).